Consider the following 329-residue polypeptide: DNA-directed RNA polymerase subunit alpha (329 aa).

Residues 1–233 are alpha N-terminal domain (alpha-NTD); sequence MVREKVKVST…NLFIPFLHVE (233 aa). The alpha C-terminal domain (alpha-CTD) stretch occupies residues 266 to 329; the sequence is TKELAFQYIF…KKILDILEKK (64 aa).

This sequence belongs to the RNA polymerase alpha chain family. In terms of assembly, in plastids the minimal PEP RNA polymerase catalytic core is composed of four subunits: alpha, beta, beta', and beta''. When a (nuclear-encoded) sigma factor is associated with the core the holoenzyme is formed, which can initiate transcription.

It is found in the plastid. It localises to the chloroplast. It catalyses the reaction RNA(n) + a ribonucleoside 5'-triphosphate = RNA(n+1) + diphosphate. Its function is as follows. DNA-dependent RNA polymerase catalyzes the transcription of DNA into RNA using the four ribonucleoside triphosphates as substrates. This chain is DNA-directed RNA polymerase subunit alpha, found in Arabidopsis thaliana (Mouse-ear cress).